Reading from the N-terminus, the 355-residue chain is F-box only protein 32 (355 aa).

The short motif at 62–67 (KKRKKD) is the Nuclear localization signal element. The short motif at 169 to 173 (LLQTL) is the Nuclear export signal element. Residues 223-271 (LTFTDLPLCLQLNIMQRLSDGRDLVSLGQVAPDLHVLSEDRLLWKKLCQ) enclose the F-box domain. The Bipartite nuclear localization signal motif lies at 280 to 295 (RKRLILSDKGQLDWKK).

Part of the SCF (SKP1-CUL1-F-box) E3 ubiquitin-protein ligase complex SCF(FBXO32) formed of CUL1, SKP1, RBX1 and FBXO32.

It localises to the cytoplasm. Its subcellular location is the nucleus. It participates in protein modification; protein ubiquitination. Substrate recognition component of a SCF (SKP1-CUL1-F-box protein) E3 ubiquitin-protein ligase complex which mediates the ubiquitination and subsequent proteasomal degradation of target proteins. Probably recognizes and binds to phosphorylated target proteins during skeletal muscle atrophy. Recognizes TERF1. The sequence is that of F-box only protein 32 (FBXO32) from Bos taurus (Bovine).